A 27-amino-acid polypeptide reads, in one-letter code: Phospholipase A2 2 (27 aa).

The tract at residues 1–27 (FMKVIDPGTKWCGPGNKAADDTDNGKN) is disordered. Ca(2+) contacts are provided by W11, G13, and G15. Over residues 18–27 (AADDTDNGKN) the composition is skewed to basic and acidic residues.

It belongs to the phospholipase A2 family. Ca(2+) serves as cofactor. As to expression, expressed by the venom gland.

The protein localises to the secreted. It carries out the reaction a 1,2-diacyl-sn-glycero-3-phosphocholine + H2O = a 1-acyl-sn-glycero-3-phosphocholine + a fatty acid + H(+). Functionally, PLA2 catalyzes the calcium-dependent hydrolysis of the 2-acyl groups in 3-sn-phosphoglycerides. In Opisthacanthus cayaporum (South American scorpion), this protein is Phospholipase A2 2.